We begin with the raw amino-acid sequence, 88 residues long: Phosphoribosyl-ATP pyrophosphatase (88 aa).

Belongs to the PRA-PH family.

It is found in the cytoplasm. It catalyses the reaction 1-(5-phospho-beta-D-ribosyl)-ATP + H2O = 1-(5-phospho-beta-D-ribosyl)-5'-AMP + diphosphate + H(+). It participates in amino-acid biosynthesis; L-histidine biosynthesis; L-histidine from 5-phospho-alpha-D-ribose 1-diphosphate: step 2/9. The chain is Phosphoribosyl-ATP pyrophosphatase from Cutibacterium acnes (strain DSM 16379 / KPA171202) (Propionibacterium acnes).